The chain runs to 358 residues: L-tryptophan methyltransferase trpM (358 aa).

This sequence belongs to the methyltransferase superfamily.

It catalyses the reaction L-tryptophan + S-adenosyl-L-methionine = N(alpha)-methyl-L-tryptophan + S-adenosyl-L-homocysteine + H(+). It carries out the reaction N(alpha)-methyl-L-tryptophan + S-adenosyl-L-methionine = N(alpha),N(alpha)-dimethyl-L-tryptophan + S-adenosyl-L-homocysteine + H(+). The enzyme catalyses N(alpha),N(alpha)-dimethyl-L-tryptophan + S-adenosyl-L-methionine = N(alpha),N(alpha),N(alpha)-trimethyl-L-tryptophan + S-adenosyl-L-homocysteine + H(+). In terms of biological role, methyltransferase that catalyzes iterative L-tryptophan N-methylations to produce L-abrine (N-alpha-methyl-L-tryptophan) and N,N-alpha-dimethyl-L-tryptophan. Also catalyzes a third methylation to yield L-hypaphorine (N,N,N-alpha-trimethyl-L-tryptopan), an agonist of the phytohormone indole-3-acetic acid. Can also N-methylate the non-native amino acid substrate 4-hydroxytryptophan, but the ability to incorporate trpM into a functional psilocybin biosynthesis pathway is indeed thwarted by the inability of the L-tryptophan decarboxylase psiD to use N,N-dimethyl-4-hydroxytryptophan as substrate. In Psilocybe serbica, this protein is L-tryptophan methyltransferase trpM.